The following is a 729-amino-acid chain: Pentatricopeptide repeat-containing protein At5g01110 (729 aa).

Residues 26–45 (TSSSPVFEPSSSSSSSSSSA) are disordered. Over residues 27 to 45 (SSSPVFEPSSSSSSSSSSA) the composition is skewed to low complexity. 17 PPR repeats span residues 112–147 (TSLS…GVSR), 164–198 (NDSV…GFTV), 199–233 (SIDA…GVGI), 234–268 (NVYT…GVYP), 269–303 (DIVT…GFSP), 304–338 (GVYT…GLSP), 339–373 (DSTT…DVVP), 374–408 (DLVC…GLIP), 409–443 (DNVI…GCAM), 444–478 (DVVT…ALFP), 479–513 (DSYT…RIRL), 514–548 (DVVT…EILP), 549–583 (TPIS…NIKP), 584–618 (TVMI…GFVP), 619–649 (DCIS…MEEE), 656–690 (DVFT…GVNP), and 691–725 (DRST…GFSP).

It belongs to the PPR family. P subfamily.

The chain is Pentatricopeptide repeat-containing protein At5g01110 from Arabidopsis thaliana (Mouse-ear cress).